The chain runs to 436 residues: 3-ketoacyl-CoA thiolase (436 aa).

Residue cysteine 99 is the Acyl-thioester intermediate of the active site. Catalysis depends on proton acceptor residues histidine 392 and cysteine 422.

It belongs to the thiolase-like superfamily. Thiolase family. In terms of assembly, heterotetramer of two alpha chains (FadJ) and two beta chains (FadI).

Its subcellular location is the cytoplasm. The enzyme catalyses an acyl-CoA + acetyl-CoA = a 3-oxoacyl-CoA + CoA. The protein operates within lipid metabolism; fatty acid beta-oxidation. Functionally, catalyzes the final step of fatty acid oxidation in which acetyl-CoA is released and the CoA ester of a fatty acid two carbons shorter is formed. The chain is 3-ketoacyl-CoA thiolase from Salmonella typhi.